We begin with the raw amino-acid sequence, 326 residues long: MRALPTLDSLARTRPSLGDSRAAEGTLTRQPANKSAVERLAADRAKYVRSTLGSSRGPVSENRVPEAPGVQHRNPIPSTLAPAPVARRAVARKPLRPDSLVIYRQKCEFVRGSDADSSRVGLMKKFFQGSGKDKMSVTPETTRVADEYKTKETEATWTKASQAAAAKPASMLPPPAPVVAMESPALPFEVAPRVPVRRSGVELRASRSKGLQRSQSDLSSRYSTARAESDTFFQYCGLDPEVVESLGRENFSAASDCVTPKMRSVSMATSDSSFSRHSEDGLQEEELLEQVPSTTSVVERNARIIKWLFTCKKAKETPSQKLQEPA.

Disordered regions lie at residues 1-37 (MRAL…KSAV), 51-80 (TLGS…PSTL), and 201-221 (VELR…LSSR). Residues 209-221 (KGLQRSQSDLSSR) are compositionally biased toward polar residues. A Phosphoserine modification is found at Ser-255.

Belongs to the FAM110 family. In terms of assembly, interacts with AKT1; the interaction is transient and follows AKT1 activation. Interacts with PPP2CA and alpha-tubulin.

Its subcellular location is the cytoplasm. The protein localises to the cytoskeleton. The protein resides in the microtubule organizing center. It is found in the centrosome. It localises to the spindle pole. Its subcellular location is the nucleus. Functionally, may play a role in microtubule organization. May play a role in cell spreading and cell migration of epithelial cells; the function may involve the AKT1 signaling pathway. This is Protein FAM110C (Fam110c) from Rattus norvegicus (Rat).